The following is a 176-amino-acid chain: L-2,4-diaminobutyric acid acetyltransferase (176 aa).

Residues 16–171 (LSIDAPRVED…THLPEVLYRI (156 aa)) form the N-acetyltransferase domain.

The protein belongs to the acetyltransferase family. EctA subfamily.

It catalyses the reaction L-2,4-diaminobutanoate + acetyl-CoA = (2S)-4-acetamido-2-aminobutanoate + CoA + H(+). It participates in amine and polyamine biosynthesis; ectoine biosynthesis; L-ectoine from L-aspartate 4-semialdehyde: step 2/3. Catalyzes the acetylation of L-2,4-diaminobutyrate (DABA) to gamma-N-acetyl-alpha,gamma-diaminobutyric acid (ADABA) with acetyl coenzyme A. This chain is L-2,4-diaminobutyric acid acetyltransferase (ectA), found in Streptomyces anulatus (Streptomyces chrysomallus).